The primary structure comprises 1120 residues: Transcription-repair-coupling factor (1120 aa).

Residues 591-756 form the Helicase ATP-binding domain; the sequence is DLSNGMLMDR…MTGLKELSII (166 aa). 604 to 611 serves as a coordination point for ATP; sequence GDVGFGKT. The short motif at 709-712 is the DEEQ box element; the sequence is DEEQ. Residues 777–931 form the Helicase C-terminal domain; that stretch reads IIRDALLHEH…GFTIASHDMD (155 aa).

This sequence in the N-terminal section; belongs to the UvrB family. The protein in the C-terminal section; belongs to the helicase family. RecG subfamily.

Its subcellular location is the cytoplasm. In terms of biological role, couples transcription and DNA repair by recognizing RNA polymerase (RNAP) stalled at DNA lesions. Mediates ATP-dependent release of RNAP and its truncated transcript from the DNA, and recruitment of nucleotide excision repair machinery to the damaged site. In Rickettsia bellii (strain RML369-C), this protein is Transcription-repair-coupling factor.